Reading from the N-terminus, the 360-residue chain is Protein RecA (360 aa).

ATP is bound at residue 77-84; that stretch reads GPESSGKT.

It belongs to the RecA family.

It localises to the cytoplasm. Functionally, can catalyze the hydrolysis of ATP in the presence of single-stranded DNA, the ATP-dependent uptake of single-stranded DNA by duplex DNA, and the ATP-dependent hybridization of homologous single-stranded DNAs. It interacts with LexA causing its activation and leading to its autocatalytic cleavage. The sequence is that of Protein RecA from Chelativorans sp. (strain BNC1).